Reading from the N-terminus, the 415-residue chain is Gamma-glutamyl phosphate reductase (415 aa).

The protein belongs to the gamma-glutamyl phosphate reductase family.

The protein resides in the cytoplasm. It catalyses the reaction L-glutamate 5-semialdehyde + phosphate + NADP(+) = L-glutamyl 5-phosphate + NADPH + H(+). Its pathway is amino-acid biosynthesis; L-proline biosynthesis; L-glutamate 5-semialdehyde from L-glutamate: step 2/2. In terms of biological role, catalyzes the NADPH-dependent reduction of L-glutamate 5-phosphate into L-glutamate 5-semialdehyde and phosphate. The product spontaneously undergoes cyclization to form 1-pyrroline-5-carboxylate. The polypeptide is Gamma-glutamyl phosphate reductase (Mycolicibacterium vanbaalenii (strain DSM 7251 / JCM 13017 / BCRC 16820 / KCTC 9966 / NRRL B-24157 / PYR-1) (Mycobacterium vanbaalenii)).